The chain runs to 472 residues: 3-isopropylmalate dehydratase large subunit (472 aa).

Residues Cys353, Cys414, and Cys417 each coordinate [4Fe-4S] cluster.

Belongs to the aconitase/IPM isomerase family. LeuC type 1 subfamily. As to quaternary structure, heterodimer of LeuC and LeuD. The cofactor is [4Fe-4S] cluster.

It catalyses the reaction (2R,3S)-3-isopropylmalate = (2S)-2-isopropylmalate. It functions in the pathway amino-acid biosynthesis; L-leucine biosynthesis; L-leucine from 3-methyl-2-oxobutanoate: step 2/4. Functionally, catalyzes the isomerization between 2-isopropylmalate and 3-isopropylmalate, via the formation of 2-isopropylmaleate. In Psychrobacter arcticus (strain DSM 17307 / VKM B-2377 / 273-4), this protein is 3-isopropylmalate dehydratase large subunit.